Reading from the N-terminus, the 351-residue chain is Dihydroorotate dehydrogenase (quinone) (351 aa).

Residues 61 to 65 (AGLDK) and T85 each bind FMN. Substrate is bound at residue K65. 110-114 (NRMGF) contacts substrate. Residues N139 and N172 each contribute to the FMN site. N172 contacts substrate. S175 functions as the Nucleophile in the catalytic mechanism. Residue N177 coordinates substrate. 2 residues coordinate FMN: K217 and T245. 246-247 (NT) lines the substrate pocket. Residues G268, G297, and 318-319 (YT) contribute to the FMN site.

The protein belongs to the dihydroorotate dehydrogenase family. Type 2 subfamily. Monomer. FMN serves as cofactor.

It is found in the cell membrane. The catalysed reaction is (S)-dihydroorotate + a quinone = orotate + a quinol. Its pathway is pyrimidine metabolism; UMP biosynthesis via de novo pathway; orotate from (S)-dihydroorotate (quinone route): step 1/1. In terms of biological role, catalyzes the conversion of dihydroorotate to orotate with quinone as electron acceptor. The chain is Dihydroorotate dehydrogenase (quinone) from Xylella fastidiosa (strain M23).